The sequence spans 144 residues: F420-non-reducing hydrogenase vhc iron-sulfur subunit D (144 aa).

It belongs to the MvhD/VhuD family. As to quaternary structure, the F420-non-reducing hydrogenase vhc is composed of three subunits; VhcA, VhcD and VhcG. Requires [2Fe-2S] cluster as cofactor.

This Methanococcus voltae protein is F420-non-reducing hydrogenase vhc iron-sulfur subunit D (vhcD).